A 456-amino-acid polypeptide reads, in one-letter code: MTTTISSNLPSQLEISPTKLLITKQPIKLRESTESPFKSMMDTFKNTIISTSPTECEESSSSTITTPSEESLSSGEESSSISDSESKIITIATLLKPSNSVQDFTPLCNGAQETEIVKISNSINLSNFIIKHLVGKGGFGKVFQVVHVDTQKVYALKVIKKNHIIAKKSVVNTLAEKDILKKISHPFIVNLHYAFQNEKKLYLVMDFVNGGQLFYHLQKEAIFSEDQVRFYMAELILALEHLHDSNIVHRDLKPENILLDSQGHCILTDFGLAKLEVKTNNETFSFAGTLEYMAPEMIQHATCGKAVDWWSIGILMYDMMIGKPPFEHKNRALMQEKIISEKAKFPKFVSSSARSLINGLLTKDPTKRLGANGAIEIKRHPFFKSIQWRKIENKEITPPFVPSTKGIDDISNFDHASLKAHQRDSFSTSPTLSSSQQAYFDGFSFVRTPVLLESQK.

Low complexity predominate over residues 50 to 83 (STSPTECEESSSSTITTPSEESLSSGEESSSISD). A disordered region spans residues 50–84 (STSPTECEESSSSTITTPSEESLSSGEESSSISDS). Residues 128 to 383 (FIIKHLVGKG…AIEIKRHPFF (256 aa)) form the Protein kinase domain. Residues 134 to 142 (VGKGGFGKV) and Lys157 each bind ATP. Asp251 functions as the Proton acceptor in the catalytic mechanism. Residues 384–455 (KSIQWRKIEN…VRTPVLLESQ (72 aa)) enclose the AGC-kinase C-terminal domain.

This sequence belongs to the protein kinase superfamily. AGC Ser/Thr protein kinase family.

It carries out the reaction L-seryl-[protein] + ATP = O-phospho-L-seryl-[protein] + ADP + H(+). The enzyme catalyses L-threonyl-[protein] + ATP = O-phospho-L-threonyl-[protein] + ADP + H(+). This is Probable serine/threonine-protein kinase DDB_G0277449 from Dictyostelium discoideum (Social amoeba).